Reading from the N-terminus, the 633-residue chain is 1-deoxy-D-xylulose-5-phosphate synthase (633 aa).

Residues H72 and 113-115 each bind thiamine diphosphate; that span reads GHS. D144 contributes to the Mg(2+) binding site. Thiamine diphosphate-binding positions include 145–146, N173, Y284, and E367; that span reads GA. A Mg(2+)-binding site is contributed by N173.

This sequence belongs to the transketolase family. DXPS subfamily. In terms of assembly, homodimer. It depends on Mg(2+) as a cofactor. Thiamine diphosphate is required as a cofactor.

It carries out the reaction D-glyceraldehyde 3-phosphate + pyruvate + H(+) = 1-deoxy-D-xylulose 5-phosphate + CO2. It functions in the pathway metabolic intermediate biosynthesis; 1-deoxy-D-xylulose 5-phosphate biosynthesis; 1-deoxy-D-xylulose 5-phosphate from D-glyceraldehyde 3-phosphate and pyruvate: step 1/1. Catalyzes the acyloin condensation reaction between C atoms 2 and 3 of pyruvate and glyceraldehyde 3-phosphate to yield 1-deoxy-D-xylulose-5-phosphate (DXP). This Bacillus velezensis (strain DSM 23117 / BGSC 10A6 / LMG 26770 / FZB42) (Bacillus amyloliquefaciens subsp. plantarum) protein is 1-deoxy-D-xylulose-5-phosphate synthase.